The sequence spans 171 residues: Peptide deformylase (171 aa).

Fe cation-binding residues include cysteine 91 and histidine 133. Glutamate 134 is a catalytic residue. A Fe cation-binding site is contributed by histidine 137.

It belongs to the polypeptide deformylase family. The cofactor is Fe(2+).

The catalysed reaction is N-terminal N-formyl-L-methionyl-[peptide] + H2O = N-terminal L-methionyl-[peptide] + formate. Removes the formyl group from the N-terminal Met of newly synthesized proteins. Requires at least a dipeptide for an efficient rate of reaction. N-terminal L-methionine is a prerequisite for activity but the enzyme has broad specificity at other positions. The protein is Peptide deformylase of Sodalis glossinidius (strain morsitans).